Here is a 115-residue protein sequence, read N- to C-terminus: MIVNESKNLSWEGEVRIADSFIKRALGLMFKKPRYALVFILPLETRINASIHGFFMLESIDVIFLDSNFRVVDVTTLKPWRIYIPKARARYIIEGPRGLKESIKPEFGDKIKWFT.

The protein belongs to the UPF0127 family.

This Pyrococcus horikoshii (strain ATCC 700860 / DSM 12428 / JCM 9974 / NBRC 100139 / OT-3) protein is UPF0127 protein PH1112.